The following is a 184-amino-acid chain: Bcl-2-modifying factor (184 aa).

Residues 67-75 form an interaction with DLC2 region; sequence DKATQTLSP. A BH3 motif is present at residues 133–147; it reads IARKLQCIADQFHRL.

The protein belongs to the Bcl-2 family. Interacts with MCL1, BCL2, BCL2L1/BCL-Xl, BCL2A1 and BCL2L2/BCL-w. Interacts with the myosin V actin motor complex through its binding to DLC2. Isoform 1 is mainly expressed in B-lymphoid cells. Isoform 2 and isoform 3 are mainly expressed in B-CLL and normal B-cells.

Functionally, may play a role in apoptosis. Isoform 1 seems to be the main initiator. The polypeptide is Bcl-2-modifying factor (BMF) (Homo sapiens (Human)).